The following is a 164-amino-acid chain: Aphid transmission protein (164 aa).

This sequence belongs to the caulimoviridae ORF II family.

In terms of biological role, this protein is involved in virus transmission. The sequence is that of Aphid transmission protein from Scrophularia californica (California bee plant).